A 1197-amino-acid chain; its full sequence is DNA-directed RNA polymerase subunit beta (1197 aa).

The protein belongs to the RNA polymerase beta chain family. The RNAP catalytic core consists of 2 alpha, 1 beta, 1 beta' and 1 omega subunit. When a sigma factor is associated with the core the holoenzyme is formed, which can initiate transcription.

The catalysed reaction is RNA(n) + a ribonucleoside 5'-triphosphate = RNA(n+1) + diphosphate. Its function is as follows. DNA-dependent RNA polymerase catalyzes the transcription of DNA into RNA using the four ribonucleoside triphosphates as substrates. This is DNA-directed RNA polymerase subunit beta from Streptococcus pyogenes serotype M12 (strain MGAS9429).